Here is a 658-residue protein sequence, read N- to C-terminus: MPVGLSVGGALGDPSPSRPFRPSRYVPVSAATAFLVGATTLFLCFTCPWLSEKFSSFIPLYNVVVFLFTLANFCMATFMDPGVFPRAEEDEDKEDDFRAPLYKTVEVRGIQVRMKWCSTCRFYRPPRCSHCSVCDNCVEEFDHHCPWVNNCIGRRNYRYFFLFLLSLTVHIMDVFGFSLLYILHHTKQLDLVQSGVTMAVMCVAGLFFVPVAGLTGFHVVLVARGRTTNEQVTGKFRGGVNPFTHGCFKNIAHVLCSSQAPRYLGRLRKPQSVQVQPPFLRPPLSEAQLAAKVLDNGIQQSKSSLEIMESQSTDADPPPPPKPEHRYPGLPHTQNEECSLLTEAPPTPSLYKYRPAYSSPGKNHTASTHSSKMSRGNSMTESPSVPVTTGQPSYRSDPSLSSRGAAGCRGGAEGGRSGSGGLGGASAFGGRSYPSFTDTLLQSAAASCSSSLRSAHTAHNALGPLISEGTTSTSYKSLANQTRNGSLSYESLLTPSESPEFESAAHELSPPRPHPPHSLSTAAGAAPILGYTSPFLSAQQREGSLQACPAPLRPSPNRAFLRPISSPPSRAPPLSPRARSLGSPPPGPAPGHTPLGKSMSYGGGAELQHRPSSSGGGTSMPNSTIKQNVANHNTHSHKPARGVKKVSGVGGTTYEISV.

Residues Met1–Arg24 lie on the Cytoplasmic side of the membrane. The chain crosses the membrane as a helical span at residues Tyr25–Phe45. Over Thr46–Ser56 the chain is Extracellular. The chain crosses the membrane as a helical span at residues Phe57–Thr77. At Phe78–Tyr159 the chain is on the cytoplasmic side. The 51-residue stretch at Lys115–Leu165 folds into the DHHC domain. Cys145 functions as the S-palmitoyl cysteine intermediate in the catalytic mechanism. The chain crosses the membrane as a helical span at residues Phe160 to Leu180. Residues Tyr181–Cys202 lie on the Extracellular side of the membrane. The helical transmembrane segment at Val203–Ala223 threads the bilayer. The Cytoplasmic segment spans residues Arg224–Val658. 3 disordered regions span residues Glu306–Ser419, Glu490–Ala522, and Gln540–Val658. Positions Pro360 to Pro398 are enriched in polar residues. The span at Gly407–Ser419 shows a compositional bias: gly residues. A compositionally biased stretch (pro residues) spans Ser565–Ser575. Residues Ser619–Asn633 are compositionally biased toward polar residues. Residues Thr634–Lys644 show a composition bias toward basic residues.

This sequence belongs to the DHHC palmitoyltransferase family. ERF2/ZDHHC9 subfamily.

The protein resides in the cell membrane. It catalyses the reaction L-cysteinyl-[protein] + hexadecanoyl-CoA = S-hexadecanoyl-L-cysteinyl-[protein] + CoA. In terms of biological role, palmitoyltransferase that catalyzes the addition of palmitate onto various protein substrates and is involved in a variety of cellular processes. The chain is Palmitoyltransferase ZDHHC5-B from Danio rerio (Zebrafish).